We begin with the raw amino-acid sequence, 360 residues long: Photosystem II protein D1 (360 aa).

Transmembrane regions (helical) follow at residues 29–46 (YIGW…TATS), 118–133 (HFLL…EWEL), and 142–156 (WISV…AAAA). Residue His118 coordinates chlorophyll a. Tyr126 contributes to the pheophytin a binding site. Positions 170 and 189 each coordinate [CaMn4O5] cluster. The helical transmembrane segment at 197–218 (FHQLGVAGVFGGSLFSAMHGSL) threads the bilayer. A chlorophyll a-binding site is contributed by His198. A quinone contacts are provided by residues His215 and 264–265 (SF). A Fe cation-binding site is contributed by His215. His272 lines the Fe cation pocket. The helical transmembrane segment at 274–288 (FLGLWPVVGIWFTAM) threads the bilayer. The [CaMn4O5] cluster site is built by His332, Glu333, Asp342, and Ala344. Positions 345–360 (SSNSLPVSLVAPSVNG) are excised as a propeptide.

This sequence belongs to the reaction center PufL/M/PsbA/D family. In terms of assembly, PSII is composed of 1 copy each of membrane proteins PsbA, PsbB, PsbC, PsbD, PsbE, PsbF, PsbH, PsbI, PsbJ, PsbK, PsbL, PsbM, PsbT, PsbX, PsbY, PsbZ, Psb30/Ycf12, at least 3 peripheral proteins of the oxygen-evolving complex and a large number of cofactors. It forms dimeric complexes. It depends on The D1/D2 heterodimer binds P680, chlorophylls that are the primary electron donor of PSII, and subsequent electron acceptors. It shares a non-heme iron and each subunit binds pheophytin, quinone, additional chlorophylls, carotenoids and lipids. D1 provides most of the ligands for the Mn4-Ca-O5 cluster of the oxygen-evolving complex (OEC). There is also a Cl(-1) ion associated with D1 and D2, which is required for oxygen evolution. The PSII complex binds additional chlorophylls, carotenoids and specific lipids. as a cofactor. Post-translationally, tyr-161 forms a radical intermediate that is referred to as redox-active TyrZ, YZ or Y-Z. In terms of processing, C-terminally processed by CTPA; processing is essential to allow assembly of the oxygen-evolving complex and thus photosynthetic growth.

The protein localises to the plastid. The protein resides in the chloroplast thylakoid membrane. The enzyme catalyses 2 a plastoquinone + 4 hnu + 2 H2O = 2 a plastoquinol + O2. Photosystem II (PSII) is a light-driven water:plastoquinone oxidoreductase that uses light energy to abstract electrons from H(2)O, generating O(2) and a proton gradient subsequently used for ATP formation. It consists of a core antenna complex that captures photons, and an electron transfer chain that converts photonic excitation into a charge separation. The D1/D2 (PsbA/PsbD) reaction center heterodimer binds P680, the primary electron donor of PSII as well as several subsequent electron acceptors. This is Photosystem II protein D1 from Gracilaria tenuistipitata var. liui (Red alga).